Consider the following 337-residue polypeptide: MANSC domain-containing protein 4 (337 aa).

The N-terminal stretch at 1–18 (MRAVELLLLLGLASMVHG) is a signal peptide. The Extracellular segment spans residues 19–278 (LCSPTVFYRD…SSENEEPWDG (260 aa)). One can recognise an MANSC domain in the interval 33-113 (RFPGMLLDLE…LEPGASAILY (81 aa)). 3 N-linked (GlcNAc...) asparagine glycosylation sites follow: N114, N227, and N251. Composition is skewed to polar residues over residues 216–230 (SPST…NKTI) and 239–260 (TRVS…VNKT). A disordered region spans residues 216–277 (SPSTDFTHSP…HSSENEEPWD (62 aa)). The helical transmembrane segment at 279–299 (APASAGVWLACVTLGAAVISL) threads the bilayer. The Cytoplasmic segment spans residues 300–337 (CCRVVLGTSRCCGKRQGWSHMGQRSASGCRRNTLKENS). Residues 314–337 (RQGWSHMGQRSASGCRRNTLKENS) form a disordered region.

The protein resides in the membrane. The polypeptide is MANSC domain-containing protein 4 (Mansc4) (Mus musculus (Mouse)).